A 360-amino-acid polypeptide reads, in one-letter code: Holliday junction branch migration complex subunit RuvB (360 aa).

A large ATPase domain (RuvB-L) region spans residues 4–196; that stretch reads HEEDLDQAEE…FGFTAHLEFY (193 aa). ATP is bound by residues Leu-35, Arg-36, Gly-77, Lys-80, Thr-81, Thr-82, 143–145, Arg-186, Tyr-196, and Arg-233; that span reads EDF. Thr-81 provides a ligand contact to Mg(2+). The interval 197–267 is small ATPAse domain (RuvB-S); it reads EPDELDLIVQ…VAQDALDLYE (71 aa). The head domain (RuvB-H) stretch occupies residues 270-360; the sequence is QLGLDRLDRG…PESDPPLFED (91 aa). DNA-binding residues include Arg-306, Arg-325, and Arg-330.

The protein belongs to the RuvB family. In terms of assembly, homohexamer. Forms an RuvA(8)-RuvB(12)-Holliday junction (HJ) complex. HJ DNA is sandwiched between 2 RuvA tetramers; dsDNA enters through RuvA and exits via RuvB. An RuvB hexamer assembles on each DNA strand where it exits the tetramer. Each RuvB hexamer is contacted by two RuvA subunits (via domain III) on 2 adjacent RuvB subunits; this complex drives branch migration. In the full resolvosome a probable DNA-RuvA(4)-RuvB(12)-RuvC(2) complex forms which resolves the HJ.

It is found in the cytoplasm. It catalyses the reaction ATP + H2O = ADP + phosphate + H(+). In terms of biological role, the RuvA-RuvB-RuvC complex processes Holliday junction (HJ) DNA during genetic recombination and DNA repair, while the RuvA-RuvB complex plays an important role in the rescue of blocked DNA replication forks via replication fork reversal (RFR). RuvA specifically binds to HJ cruciform DNA, conferring on it an open structure. The RuvB hexamer acts as an ATP-dependent pump, pulling dsDNA into and through the RuvAB complex. RuvB forms 2 homohexamers on either side of HJ DNA bound by 1 or 2 RuvA tetramers; 4 subunits per hexamer contact DNA at a time. Coordinated motions by a converter formed by DNA-disengaged RuvB subunits stimulates ATP hydrolysis and nucleotide exchange. Immobilization of the converter enables RuvB to convert the ATP-contained energy into a lever motion, pulling 2 nucleotides of DNA out of the RuvA tetramer per ATP hydrolyzed, thus driving DNA branch migration. The RuvB motors rotate together with the DNA substrate, which together with the progressing nucleotide cycle form the mechanistic basis for DNA recombination by continuous HJ branch migration. Branch migration allows RuvC to scan DNA until it finds its consensus sequence, where it cleaves and resolves cruciform DNA. This chain is Holliday junction branch migration complex subunit RuvB, found in Nocardioides sp. (strain ATCC BAA-499 / JS614).